The chain runs to 87 residues: Small ribosomal subunit protein bS20 (87 aa).

Residues 1 to 11 (MANIKSAKKRA) are compositionally biased toward basic residues. The disordered stretch occupies residues 1-26 (MANIKSAKKRAVQSEKRRQHNASQRS).

It belongs to the bacterial ribosomal protein bS20 family.

Its function is as follows. Binds directly to 16S ribosomal RNA. The protein is Small ribosomal subunit protein bS20 of Actinobacillus pleuropneumoniae serotype 5b (strain L20).